Consider the following 262-residue polypeptide: MSLSSSVTKHLISASILAIVAMQLPSVHSVLSLNETNAYLHHICINGEGTFKSGSPYEKEIKQLIDFLSSFIKDYSFVHGVSGIGPDDINVKFQCRGDTLQAKCRSCLATAFSEIRSKCPNNKGRIIWYDNCHLDLSSIYTYGQIDYKNNFYMYNAKDVRGDKKSFYKNMKAFLHKLKAKASSKENKPYVKDYMYAAGRESLGTVKLYAMVQCTQDLSLKNCTVCLDWIMTKLPECCNGKQGGRVLSPSCNFRYELYPFVEN.

A signal peptide spans M1–S29. Gnk2-homologous domains follow at residues Y39–T141 and Y147–F259.

It belongs to the cysteine-rich repeat secretory protein family.

The protein resides in the secreted. In Arabidopsis thaliana (Mouse-ear cress), this protein is Putative cysteine-rich repeat secretory protein 24 (CRRSP24).